The following is a 478-amino-acid chain: Succinyl-CoA:acetate/propanoyl-CoA:succinate CoA transferase (478 aa).

The N-terminal 30 residues, 1–30, are a transit peptide targeting the mitochondrion; that stretch reads MYQLAFLRCRYASPIVREARRAFHASRKCQ. A CoA-binding site is contributed by 256 to 260; it reads GIGAI. E279 (5-glutamyl coenzyme A thioester intermediate) is an active-site residue. CoA-binding residues include I354, G377, and K404.

It belongs to the acetyl-CoA hydrolase/transferase family.

The protein localises to the mitochondrion. The catalysed reaction is succinyl-CoA + acetate = succinate + acetyl-CoA. The enzyme catalyses propanoyl-CoA + succinate = propanoate + succinyl-CoA. Transferase involved in anaerobic fumarate-respiration in the mitochondria. Catalyzes the transfer of the CoA moiety of acetyl-CoA or propionyl-CoA to succinate, thereby forming acetate and propionate, respectively. Acetate and propionate are the two major metabolic end products in the anaerobic mitochondrial metabolism of F.hepatica. Also displays CoA transferase activities from acetyl-CoA to propionate, acetate and butyrate. This is Succinyl-CoA:acetate/propanoyl-CoA:succinate CoA transferase from Fasciola hepatica (Liver fluke).